The sequence spans 211 residues: MTRGKLITFEGPDGAGKTTVLERLVPLLQAALGQTIVTTREPGGVAIAEKIRQLILDVSHTTMDDKTELLLYIAARRQHLVEKIMPALESGHLVLVDRFIDSSVAYQGAGRGLDKQAIQWLNHFATDGVDPDLTLYFDVPSELGLARIAQNTEREINRLDLEQLDLHQRVRKGYLELALENPQRIVKIDASQDLESVVSAALAAIITHSQA.

Position 11 to 18 (11 to 18) interacts with ATP; it reads GPDGAGKT.

Belongs to the thymidylate kinase family.

It carries out the reaction dTMP + ATP = dTDP + ADP. Its function is as follows. Phosphorylation of dTMP to form dTDP in both de novo and salvage pathways of dTTP synthesis. The polypeptide is Thymidylate kinase (Streptococcus equi subsp. equi (strain 4047)).